The following is a 61-amino-acid chain: uncharacterized protein (61 aa).

This is an uncharacterized protein from Saccharomyces cerevisiae (strain ATCC 204508 / S288c) (Baker's yeast).